Here is a 719-residue protein sequence, read N- to C-terminus: MTEPEITPELIAAHGLKPDEYERILGIIGREPSFTELGIFSAMWNEHCSYKSSKKWLRTLPTTGPQVICGPGENAGVVDIGDGQAVIFKMESHNHPSYIEPYQGAATGVGGILRDVFTMGARPIAAMNALSFGEPNHSKTAHIVKGVVEGIGGYGNAFGVPTVGGEVRFHRAYNGNCLVNAFAAGLADADKIFYSAASGVGMPVVYLGAKTGRDGVGGATMASAEFDDTIEEKRPTVQVGDPFTEKRLLEACLELMASDSVISIQDMGAAGLTCSAVEMGDKGDLGIKLQLDNVPQREANMTAYEMMLSESQERMLMVLKPEKEAVARAIFEKWDLDFAIVGETIPEDRFLILHGNEVKADLPLKALSGTAPEYDRPWVETPAAAPMAPVAEVDPIEGLKALIGSPSYAHKAWVWEQYDSQVMADTVRAPGLGAGVVRVHGTPKALAFTSDVTPRYVKANPFEGGKQAVAEAYRNLTAVGAKPLATTDNMNFGNPEKPEIMGQFVGAIKGIGAAVAALDMPIVSGNVSLYNETDGVAILPTPTIGAVGILQSLDELIAGQPEEGDVALVIGETKGHLGQSALLAELLGREDGDAPHVDLDAEKRHGEFLRANRKLVSAATDLSDGGLALAAFEMAEGAGLGLTLTVTGTAQLFGEDQARYLVAVHPDQTKALQAAAEAAGVPLQQVGQFGGEEVTLGTVSAPLVDLSRLHRGAFAAAIG.

The active site involves His47. 2 residues coordinate ATP: Tyr50 and Lys89. Glu91 is a binding site for Mg(2+). Substrate is bound by residues 92–95 and Arg114; that span reads SHNH. The Proton acceptor role is filled by His93. Residue Asp115 participates in Mg(2+) binding. Substrate is bound at residue Gln238. Asp266 is a binding site for Mg(2+). Position 310–312 (310–312) interacts with substrate; that stretch reads ESQ. ATP-binding residues include Asp488 and Gly525. Asn526 contacts Mg(2+). Ser528 is a binding site for substrate.

It belongs to the FGAMS family. As to quaternary structure, monomer. Part of the FGAM synthase complex composed of 1 PurL, 1 PurQ and 2 PurS subunits.

Its subcellular location is the cytoplasm. It catalyses the reaction N(2)-formyl-N(1)-(5-phospho-beta-D-ribosyl)glycinamide + L-glutamine + ATP + H2O = 2-formamido-N(1)-(5-O-phospho-beta-D-ribosyl)acetamidine + L-glutamate + ADP + phosphate + H(+). The protein operates within purine metabolism; IMP biosynthesis via de novo pathway; 5-amino-1-(5-phospho-D-ribosyl)imidazole from N(2)-formyl-N(1)-(5-phospho-D-ribosyl)glycinamide: step 1/2. Part of the phosphoribosylformylglycinamidine synthase complex involved in the purines biosynthetic pathway. Catalyzes the ATP-dependent conversion of formylglycinamide ribonucleotide (FGAR) and glutamine to yield formylglycinamidine ribonucleotide (FGAM) and glutamate. The FGAM synthase complex is composed of three subunits. PurQ produces an ammonia molecule by converting glutamine to glutamate. PurL transfers the ammonia molecule to FGAR to form FGAM in an ATP-dependent manner. PurS interacts with PurQ and PurL and is thought to assist in the transfer of the ammonia molecule from PurQ to PurL. This chain is Phosphoribosylformylglycinamidine synthase subunit PurL, found in Cereibacter sphaeroides (strain ATCC 17025 / ATH 2.4.3) (Rhodobacter sphaeroides).